The chain runs to 326 residues: uncharacterized protein (326 aa).

Residue 127–134 (GATGSGKS) participates in ATP binding.

Belongs to the GSP E family.

This is an uncharacterized protein from Escherichia coli (strain K12).